Reading from the N-terminus, the 831-residue chain is Multiphosphoryl transfer protein (831 aa).

One can recognise an HPr domain in the interval M1–S90. The active-site Pros-phosphohistidine intermediate; for HPr activity is the H15. Residue H15 is modified to Phosphohistidine; by EI. The tract at residues G119–D650 is PTS EI. H298 (tele-phosphohistidine intermediate; for PTS EI activity) is an active-site residue. The residue at position 298 (H298) is a Phosphohistidine; by autocatalysis. Phosphoenolpyruvate is bound by residues R405 and R441. Residues E540 and D564 each coordinate Mg(2+). Residues N563–D564 and R574 each bind phosphoenolpyruvate. C611 (proton donor; for EI activity) is an active-site residue. The 144-residue stretch at P685 to E828 folds into the PTS EIIA type-2 domain. H747 serves as the catalytic Tele-phosphohistidine intermediate; for PTS EIIA activity. Residue H747 is modified to Phosphohistidine; by HPr.

Belongs to the PEP-utilizing enzyme family. Mg(2+) serves as cofactor.

The protein localises to the cytoplasm. It catalyses the reaction L-histidyl-[protein] + phosphoenolpyruvate = N(pros)-phospho-L-histidyl-[protein] + pyruvate. The enzyme catalyses D-fructose(out) + N(pros)-phospho-L-histidyl-[protein] = D-fructose 1-phosphate(in) + L-histidyl-[protein]. Multifunctional protein that includes general (non sugar-specific) and sugar-specific components of the phosphoenolpyruvate-dependent sugar phosphotransferase system (sugar PTS). This major carbohydrate active transport system catalyzes the phosphorylation of incoming sugar substrates concomitantly with their translocation across the cell membrane. The enzyme II FryABC PTS system is involved in fructose transport. In Shigella flexneri, this protein is Multiphosphoryl transfer protein (fryA).